The chain runs to 132 residues: Small ribosomal subunit protein uS8 (132 aa).

It belongs to the universal ribosomal protein uS8 family. In terms of assembly, part of the 30S ribosomal subunit. Contacts proteins S5 and S12.

One of the primary rRNA binding proteins, it binds directly to 16S rRNA central domain where it helps coordinate assembly of the platform of the 30S subunit. The chain is Small ribosomal subunit protein uS8 from Bartonella henselae (strain ATCC 49882 / DSM 28221 / CCUG 30454 / Houston 1) (Rochalimaea henselae).